The following is a 162-amino-acid chain: MSDKIGLFTGSFDPMTNGHLDIIERASRLFDKLYVGIFFNPHKQGFLPLENRKRGLEKAVKHLGNVKVVSSHDKLVVDVAKRLGATCLVRGLRNASDLQYEASFDYYNHQLSSDIETIYLHSRPEHLYISSSGVRELLKFGQDIACYVPESILEEIRNEKKD.

Serine 11 contributes to the substrate binding site. ATP contacts are provided by residues serine 11 to phenylalanine 12 and histidine 19. Residues lysine 43, valine 76, and arginine 90 each contribute to the substrate site. ATP is bound by residues glycine 91 to arginine 93, glutamate 101, and histidine 126 to serine 132.

Belongs to the bacterial CoaD family. As to quaternary structure, homohexamer. Mg(2+) is required as a cofactor.

Its subcellular location is the cytoplasm. It carries out the reaction (R)-4'-phosphopantetheine + ATP + H(+) = 3'-dephospho-CoA + diphosphate. It functions in the pathway cofactor biosynthesis; coenzyme A biosynthesis; CoA from (R)-pantothenate: step 4/5. Reversibly transfers an adenylyl group from ATP to 4'-phosphopantetheine, yielding dephospho-CoA (dPCoA) and pyrophosphate. The protein is Phosphopantetheine adenylyltransferase of Streptococcus pneumoniae (strain 70585).